A 460-amino-acid polypeptide reads, in one-letter code: UDP-N-acetylmuramoylalanine--D-glutamate ligase (460 aa).

ATP is bound at residue 115 to 121 (GTNGKTT).

This sequence belongs to the MurCDEF family.

Its subcellular location is the cytoplasm. It catalyses the reaction UDP-N-acetyl-alpha-D-muramoyl-L-alanine + D-glutamate + ATP = UDP-N-acetyl-alpha-D-muramoyl-L-alanyl-D-glutamate + ADP + phosphate + H(+). It functions in the pathway cell wall biogenesis; peptidoglycan biosynthesis. Cell wall formation. Catalyzes the addition of glutamate to the nucleotide precursor UDP-N-acetylmuramoyl-L-alanine (UMA). The polypeptide is UDP-N-acetylmuramoylalanine--D-glutamate ligase (Salinibacter ruber (strain DSM 13855 / M31)).